We begin with the raw amino-acid sequence, 518 residues long: Sensor protein kinase HptS (518 aa).

A run of 2 helical transmembrane segments spans residues 20 to 40 (IFPV…IYIW) and 222 to 242 (GITL…FGFI). Residues 297-513 (EQLIHSIEHT…LICYKIPLSR (217 aa)) enclose the Histidine kinase domain. At H325 the chain carries Phosphohistidine; by autocatalysis.

Post-translationally, autophosphorylated.

Its subcellular location is the cell membrane. The enzyme catalyses ATP + protein L-histidine = ADP + protein N-phospho-L-histidine.. Functionally, member of the two-component regulatory system HptS/HptR that regulates genes involved in hexose phosphate transport system in response to changes in extracellular phosphate sources. May act as a sensor protein kinase which is autophosphorylated at a histidine residue and transfers its phosphate group to the conserved aspartic acid residue in the regulatory domain of HptS. In turn, HptS antagonizes CcpA-dependent transcription of a subset of CcpA-regulated genes involved in antibiotic susceptibility. The sequence is that of Sensor protein kinase HptS (hptS) from Staphylococcus aureus (strain MRSA252).